A 202-amino-acid polypeptide reads, in one-letter code: Small ribosomal subunit protein uS4 (202 aa).

The tract at residues Leu15–Arg42 is disordered. In terms of domain architecture, S4 RNA-binding spans Ser90–Asn152.

It belongs to the universal ribosomal protein uS4 family. In terms of assembly, part of the 30S ribosomal subunit. Contacts protein S5. The interaction surface between S4 and S5 is involved in control of translational fidelity.

In terms of biological role, one of the primary rRNA binding proteins, it binds directly to 16S rRNA where it nucleates assembly of the body of the 30S subunit. With S5 and S12 plays an important role in translational accuracy. This Synechococcus sp. (strain CC9902) protein is Small ribosomal subunit protein uS4.